Consider the following 817-residue polypeptide: Phospholipase D alpha 2 (817 aa).

Residues 1–130 (MAHLLLHGTL…LSGEAIERRL (130 aa)) form the C2 domain. Asp192 is a Ca(2+) binding site. The 40-residue stretch at 333 to 372 (YMITHHQKTVIVDHDMPVPRGGGSRRIVSFVGGLDLCDGR) folds into the PLD phosphodiesterase 1 domain. Catalysis depends on residues His338, Lys340, and Asp345. Residue His338 participates in a 1,2-diacyl-sn-glycero-3-phosphate binding. His378 and His412 together coordinate Ca(2+). Residues Gln529 and His668 each coordinate a 1,2-diacyl-sn-glycero-3-phosphate. Residues 663 to 690 (FMIYVHSKMMIVDDEYIIVGSANINQRS) enclose the PLD phosphodiesterase 2 domain. Active-site residues include His668, Lys670, and Asp675. Ca(2+) is bound at residue Glu730.

Belongs to the phospholipase D family. C2-PLD subfamily. The cofactor is Ca(2+).

The enzyme catalyses a 1,2-diacyl-sn-glycero-3-phosphocholine + H2O = a 1,2-diacyl-sn-glycero-3-phosphate + choline + H(+). Hydrolyzes glycerol-phospholipids at the terminal phosphodiesteric bond. Plays an important role in various cellular processes. The sequence is that of Phospholipase D alpha 2 (PLD2) from Oryza sativa subsp. japonica (Rice).